The primary structure comprises 373 residues: tRNA-specific 2-thiouridylase MnmA (373 aa).

ATP is bound by residues 12 to 19 and Met-38; that span reads GMSGGVDS. Residues 98-100 form an interaction with target base in tRNA region; that stretch reads NPD. Cys-103 acts as the Nucleophile in catalysis. Cysteines 103 and 200 form a disulfide. Position 127 (Gly-127) interacts with ATP. An interaction with tRNA region spans residues 150–152; the sequence is KDQ. Cys-200 serves as the catalytic Cysteine persulfide intermediate. An interaction with tRNA region spans residues 312 to 313; that stretch reads RY.

The protein belongs to the MnmA/TRMU family.

The protein localises to the cytoplasm. It catalyses the reaction S-sulfanyl-L-cysteinyl-[protein] + uridine(34) in tRNA + AH2 + ATP = 2-thiouridine(34) in tRNA + L-cysteinyl-[protein] + A + AMP + diphosphate + H(+). In terms of biological role, catalyzes the 2-thiolation of uridine at the wobble position (U34) of tRNA, leading to the formation of s(2)U34. This Streptococcus pneumoniae (strain ATCC BAA-255 / R6) protein is tRNA-specific 2-thiouridylase MnmA.